The sequence spans 373 residues: Leucine aminopeptidase 1 (373 aa).

A signal peptide spans 1–18; the sequence is MKFISVLALGATATSVLG. Zn(2+) is bound by residues His-176 and Asp-195. Asn-196 is a glycosylation site (N-linked (GlcNAc...) asparagine). Residues Glu-234 and Asp-261 each coordinate Zn(2+). Asn-286 carries an N-linked (GlcNAc...) asparagine glycan. Residues Cys-310 and Cys-314 are joined by a disulfide bond. A Zn(2+)-binding site is contributed by His-343.

This sequence belongs to the peptidase M28 family. M28E subfamily. As to quaternary structure, monomer. The cofactor is Zn(2+).

It is found in the secreted. Functionally, extracellular aminopeptidase which contributes to pathogenicity. This is Leucine aminopeptidase 1 (LAP1) from Arthroderma otae (strain ATCC MYA-4605 / CBS 113480) (Microsporum canis).